The following is a 116-amino-acid chain: Large ribosomal subunit protein uL18 (116 aa).

The protein belongs to the universal ribosomal protein uL18 family. Part of the 50S ribosomal subunit; part of the 5S rRNA/L5/L18/L25 subcomplex. Contacts the 5S and 23S rRNAs.

Functionally, this is one of the proteins that bind and probably mediate the attachment of the 5S RNA into the large ribosomal subunit, where it forms part of the central protuberance. The sequence is that of Large ribosomal subunit protein uL18 from Shewanella putrefaciens (strain CN-32 / ATCC BAA-453).